Here is a 332-residue protein sequence, read N- to C-terminus: Probable allantoicase (332 aa).

It belongs to the allantoicase family.

It carries out the reaction allantoate + H2O = (S)-ureidoglycolate + urea. The protein operates within nitrogen metabolism; (S)-allantoin degradation; (S)-ureidoglycolate from allantoate (aminidohydrolase route): step 1/1. This is Probable allantoicase from Pseudomonas aeruginosa (strain LESB58).